The following is a 558-amino-acid chain: T-complex protein 1 subunit gamma (558 aa).

Cys-381 and Cys-387 are disulfide-bonded.

It belongs to the TCP-1 chaperonin family. In terms of assembly, heterooligomeric complex of about 850 to 900 kDa that forms two stacked rings, 12 to 16 nm in diameter.

The protein resides in the cytoplasm. Molecular chaperone; assists the folding of proteins upon ATP hydrolysis. Known to play a role, in vitro, in the folding of actin and tubulin. The chain is T-complex protein 1 subunit gamma from Thalassiosira weissflogii (Marine diatom).